The chain runs to 23 residues: Magainin-BM2 (23 aa).

Expressed by the skin glands.

The protein localises to the secreted. Functionally, antimicrobial peptide. The polypeptide is Magainin-BM2 (Xenopus boumbaensis (Mawa clawed frog)).